The following is a 350-amino-acid chain: Histidinol-phosphate aminotransferase (350 aa).

An N6-(pyridoxal phosphate)lysine modification is found at lysine 220.

Belongs to the class-II pyridoxal-phosphate-dependent aminotransferase family. Histidinol-phosphate aminotransferase subfamily. Homodimer. The cofactor is pyridoxal 5'-phosphate.

The catalysed reaction is L-histidinol phosphate + 2-oxoglutarate = 3-(imidazol-4-yl)-2-oxopropyl phosphate + L-glutamate. It participates in amino-acid biosynthesis; L-histidine biosynthesis; L-histidine from 5-phospho-alpha-D-ribose 1-diphosphate: step 7/9. The protein is Histidinol-phosphate aminotransferase of Macrococcus caseolyticus (strain JCSC5402) (Macrococcoides caseolyticum).